Here is a 713-residue protein sequence, read N- to C-terminus: Methionine--tRNA ligase (713 aa).

The 'HIGH' region signature appears at 31-41 (PYANGSIHLGH). Zn(2+) is bound by residues Cys-162, Cys-165, Cys-175, and Cys-178. The 'KMSKS' region motif lies at 348 to 352 (KMSKS). Lys-351 is a binding site for ATP. In terms of domain architecture, tRNA-binding spans 609–713 (DFAKIDLRIV…DGAKAGMRVK (105 aa)).

Belongs to the class-I aminoacyl-tRNA synthetase family. MetG type 1 subfamily. As to quaternary structure, homodimer. It depends on Zn(2+) as a cofactor.

The protein localises to the cytoplasm. It catalyses the reaction tRNA(Met) + L-methionine + ATP = L-methionyl-tRNA(Met) + AMP + diphosphate. Is required not only for elongation of protein synthesis but also for the initiation of all mRNA translation through initiator tRNA(fMet) aminoacylation. This Colwellia psychrerythraea (strain 34H / ATCC BAA-681) (Vibrio psychroerythus) protein is Methionine--tRNA ligase.